Reading from the N-terminus, the 408-residue chain is Arginine biosynthesis bifunctional protein ArgJ (408 aa).

Residues Thr156, Lys182, Thr193, Glu279, Asn403, and Ser408 each coordinate substrate. Thr193 (nucleophile) is an active-site residue.

This sequence belongs to the ArgJ family. In terms of assembly, heterotetramer of two alpha and two beta chains.

The protein localises to the cytoplasm. It carries out the reaction N(2)-acetyl-L-ornithine + L-glutamate = N-acetyl-L-glutamate + L-ornithine. The enzyme catalyses L-glutamate + acetyl-CoA = N-acetyl-L-glutamate + CoA + H(+). It functions in the pathway amino-acid biosynthesis; L-arginine biosynthesis; L-ornithine and N-acetyl-L-glutamate from L-glutamate and N(2)-acetyl-L-ornithine (cyclic): step 1/1. It participates in amino-acid biosynthesis; L-arginine biosynthesis; N(2)-acetyl-L-ornithine from L-glutamate: step 1/4. Functionally, catalyzes two activities which are involved in the cyclic version of arginine biosynthesis: the synthesis of N-acetylglutamate from glutamate and acetyl-CoA as the acetyl donor, and of ornithine by transacetylation between N(2)-acetylornithine and glutamate. This chain is Arginine biosynthesis bifunctional protein ArgJ, found in Dechloromonas aromatica (strain RCB).